The chain runs to 788 residues: Glycerol-3-phosphate acyltransferase (788 aa).

The interval leucine 104 to glutamate 135 is disordered. Residues serine 271–isoleucine 276 carry the HXXXXD motif motif.

Belongs to the GPAT/DAPAT family.

The protein resides in the cell membrane. The catalysed reaction is sn-glycerol 3-phosphate + an acyl-CoA = a 1-acyl-sn-glycero-3-phosphate + CoA. It functions in the pathway phospholipid metabolism; CDP-diacylglycerol biosynthesis; CDP-diacylglycerol from sn-glycerol 3-phosphate: step 1/3. This chain is Glycerol-3-phosphate acyltransferase, found in Mycobacterium marinum (strain ATCC BAA-535 / M).